A 350-amino-acid polypeptide reads, in one-letter code: Cobalt-precorrin-5B C(1)-methyltransferase (350 aa).

This sequence belongs to the CbiD family.

It catalyses the reaction Co-precorrin-5B + S-adenosyl-L-methionine = Co-precorrin-6A + S-adenosyl-L-homocysteine. It participates in cofactor biosynthesis; adenosylcobalamin biosynthesis; cob(II)yrinate a,c-diamide from sirohydrochlorin (anaerobic route): step 6/10. Its function is as follows. Catalyzes the methylation of C-1 in cobalt-precorrin-5B to form cobalt-precorrin-6A. This Syntrophotalea carbinolica (strain DSM 2380 / NBRC 103641 / GraBd1) (Pelobacter carbinolicus) protein is Cobalt-precorrin-5B C(1)-methyltransferase.